A 686-amino-acid polypeptide reads, in one-letter code: X-linked interleukin-1 receptor accessory protein-like 2 (686 aa).

An N-terminal signal peptide occupies residues M1–S16. Topologically, residues T17–K354 are extracellular. One can recognise an Ig-like C2-type 1 domain in the interval I32 to T132. C53 and C116 are joined by a disulfide. N63, N120, N136, N211, and N328 each carry an N-linked (GlcNAc...) asparagine glycan. Ig-like C2-type domains lie at C141 to T232 and P239 to R347. Disulfide bonds link C162–C214 and C265–C331. Residues I355–Y375 traverse the membrane as a helical segment. Residues K376–W686 are Cytoplasmic-facing. The region spanning K400–M556 is the TIR domain. E488 is an active-site residue.

This sequence belongs to the interleukin-1 receptor family. As to expression, detected in fetal brain after day 12.5, in particular in parts of the diencephalon and in the basal plate of the spinal cord. In postnatal brain detected in cerebral cortex, olfactory bulb, in the CA1 region of the hippocampus and in Purkinje cells of the Xth cerebellar lobule.

It localises to the membrane. It catalyses the reaction NAD(+) + H2O = ADP-D-ribose + nicotinamide + H(+). The sequence is that of X-linked interleukin-1 receptor accessory protein-like 2 (Il1rapl2) from Mus musculus (Mouse).